The chain runs to 508 residues: Phenylalanine--tRNA ligase alpha subunit (508 aa).

The residue at position 2 (Ala-2) is an N-acetylalanine. Thr-190 carries the phosphothreonine modification. Phosphoserine is present on residues Ser-193 and Ser-301. Lys-311 is subject to N6-acetyllysine. L-phenylalanine contacts are provided by residues Thr-329, 372-374 (QIE), and Tyr-412. Glu-414 provides a ligand contact to Mg(2+). An L-phenylalanine-binding site is contributed by Phe-438.

Belongs to the class-II aminoacyl-tRNA synthetase family. Phe-tRNA synthetase alpha subunit type 2 subfamily. As to quaternary structure, heterotetramer; dimer of two heterodimers formed by FARSA and FARSB.

It localises to the cytoplasm. It catalyses the reaction tRNA(Phe) + L-phenylalanine + ATP = L-phenylalanyl-tRNA(Phe) + AMP + diphosphate + H(+). This is Phenylalanine--tRNA ligase alpha subunit (FARSA) from Homo sapiens (Human).